Consider the following 226-residue polypeptide: Orotate phosphoribosyltransferase (226 aa).

5-phospho-alpha-D-ribose 1-diphosphate contacts are provided by residues Lys26, 73–74 (YK), Arg100, Lys101, Lys104, His106, and 128–136 (EDVTTSGKS). Residues Thr132 and Arg161 each contribute to the orotate site.

This sequence belongs to the purine/pyrimidine phosphoribosyltransferase family. PyrE subfamily. In terms of assembly, homodimer. Mg(2+) serves as cofactor.

It catalyses the reaction orotidine 5'-phosphate + diphosphate = orotate + 5-phospho-alpha-D-ribose 1-diphosphate. The protein operates within pyrimidine metabolism; UMP biosynthesis via de novo pathway; UMP from orotate: step 1/2. Functionally, catalyzes the transfer of a ribosyl phosphate group from 5-phosphoribose 1-diphosphate to orotate, leading to the formation of orotidine monophosphate (OMP). In Agathobacter rectalis (strain ATCC 33656 / DSM 3377 / JCM 17463 / KCTC 5835 / VPI 0990) (Eubacterium rectale), this protein is Orotate phosphoribosyltransferase.